Reading from the N-terminus, the 2962-residue chain is Sex determination and dosage compensation protein sdc-2 (2962 aa).

Disordered stretches follow at residues 1-28 (MSDE…ADPD) and 1061-1110 (DKRS…QVDP). Positions 15 to 27 (SFNESDSPDEADP) are enriched in acidic residues. Coiled coils occupy residues 995-1085 (LESA…LADK) and 1140-1268 (REER…KRVS). Disordered regions lie at residues 1535–1554 (PASL…GSPV) and 2198–2227 (LDSS…NQLD). Over residues 2212–2225 (FEDSPSEDENDENQ) the composition is skewed to acidic residues.

As to quaternary structure, component of the SDC complex, which consists of sdc-1, sdc-2 and sdc-3. Within the complex, interacts with sdc-1 and sdc-3. As to expression, expressed in hermaphrodites (XX), but absent in males (XO) (at protein level).

It is found in the chromosome. In terms of biological role, component of the SDC complex that functions in sex determination and in X chromosome dosage compensation specifically in hermaphrodite (XX) animals. Required for the recruitment of the condensin I-like dosage compensation complex to the male sex-determining autosomal gene her-1, thereby contributing to its repression and initiating hermaphrodite sexual development. Plays a central role in X-chromosome recognition and in the recruitment and assembly of the dosage compensation complex and the dosage compensation protein dpy-21 onto the X chromosomes in hermaphrodites, which leads to a reduction of X-linked gene transcription and an equalization of X-linked gene expression between the sexes. May confer protection against toxicity induced by heavy metals such as arsenite. The chain is Sex determination and dosage compensation protein sdc-2 from Caenorhabditis elegans.